Consider the following 367-residue polypeptide: mRNA-decapping enzyme-like protein (367 aa).

Disordered regions lie at residues 144–179 (PKAS…RDAP), 196–246 (NTAS…SSSP), and 299–333 (PNNA…PTGP). Polar residues predominate over residues 196 to 211 (NTASGSASGPYQSSAI). Low complexity predominate over residues 212 to 234 (PHQPHQPHQPTIAPPVAAAAPPQ). The segment covering 299–309 (PNNASHQQRSY) has biased composition (polar residues). Pro residues predominate over residues 315-331 (QPFPPPTPPPSLAPAPT).

The protein belongs to the DCP1 family. As to quaternary structure, homodimer. Component of the decapping complex. Interacts with DCP2 and DCP5. Interacts with BCHA1. Expressed in seedlings, mostly in root tips, root hairs, and the vascular system. Also present in roots, leaves, stems, and flowers.

Its subcellular location is the cytoplasm. It localises to the P-body. As a component of the decapping complex, involved in the degradation of mRNAs. Essential for postembryonic development. This chain is mRNA-decapping enzyme-like protein, found in Arabidopsis thaliana (Mouse-ear cress).